Here is a 299-residue protein sequence, read N- to C-terminus: Transcription elongation factor A protein 2 (299 aa).

The TFIIS N-terminal domain occupies 5-82 (EEIARIARRL…KSWKKLLDVS (78 aa)). K57 is covalently cross-linked (Glycyl lysine isopeptide (Lys-Gly) (interchain with G-Cter in ubiquitin)). Residues S59 and S100 each carry the phosphoserine modification. Positions 83–126 (DGKSRDQGRGTPLPTSSSKDASGTTDLSCKKPDPPRTSSTPRIT) are disordered. Over residues 95–109 (LPTSSSKDASGTTDL) the composition is skewed to polar residues. The region spanning 138–254 (VRNKCREMLT…EHQMARTGGT (117 aa)) is the TFIIS central domain. A TFIIS-type zinc finger spans residues 257 to 297 (DLFTCNKCRKKNCTYTQVQTRSSDEPMTTYVVCNECGNRWK). Zn(2+)-binding residues include C261, C264, C289, and C292.

This sequence belongs to the TFS-II family. As to quaternary structure, interacts with the basal transcription factor GTF2B. Interacts with REXO1. In terms of tissue distribution, testis specific.

The protein resides in the nucleus. Necessary for efficient RNA polymerase II transcription elongation past template-encoded arresting sites. The arresting sites in DNA have the property of trapping a certain fraction of elongating RNA polymerases that pass through, resulting in locked ternary complexes. Cleavage of the nascent transcript by S-II allows the resumption of elongation from the new 3'-terminus. The sequence is that of Transcription elongation factor A protein 2 (Tcea2) from Rattus norvegicus (Rat).